Here is a 440-residue protein sequence, read N- to C-terminus: Muscarinic acetylcholine receptor M2 (440 aa).

A helical transmembrane segment spans residues 1–19 (VLVAGSLSLVTIIGNILVM). At 20 to 33 (VSIKVNRHLQTVNN) the chain is on the cytoplasmic side. A helical membrane pass occupies residues 34–54 (YFLFSLACADLIIGVFSMNLY). Residues 55-71 (TLYTVIGYWPLGPVVCD) are Extracellular-facing. Cys70 and Cys150 are disulfide-bonded. Residues 72–93 (LWLALDYVVSNASVMNLLIISF) traverse the membrane as a helical segment. Residues 94–96 (DRY) carry the Important for signaling motif. Topologically, residues 94–113 (DRYFCVTKPLTYPVKRTTKM) are cytoplasmic. The chain crosses the membrane as a helical span at residues 114–136 (AGMMIAAAWVLSFILWAPAILFW). Over 137-158 (QFIVGVRTVEDGECYIQFFSNA) the chain is Extracellular. The helical transmembrane segment at 159–183 (AVTFGTAIAAFYLPVIIMTVLYWHI) threads the bilayer. Residues 184 to 361 (SRASKSRIKK…PPSREKKVTR (178 aa)) lie on the Cytoplasmic side of the membrane. The segment at 192–329 (KKDKKEPVAN…VVGSSGQNGD (138 aa)) is disordered. Phosphoserine is present on Ser206. A compositionally biased stretch (basic and acidic residues) spans 228–244 (GLEHNKIQNGKAPRDPV). Polar residues-rich tracts occupy residues 258–267 (NDSTSVSAVA), 278–287 (DENTVSTSLG), and 308–327 (SDSCTPTNTTVEVVGSSGQN). The chain crosses the membrane as a helical span at residues 362 to 384 (TILAILLAFIITWAPYNVMVLIN). Residues 385–392 (TFCAPCIP) lie on the Extracellular side of the membrane. An intrachain disulfide couples Cys387 to Cys390. A helical transmembrane segment spans residues 393–416 (NTVWTIGYWLCYINSTINPACYAL). An Important for signaling motif is present at residues 410–414 (NPACY). The Cytoplasmic portion of the chain corresponds to 417 to 440 (CNATFKKTFKHLLMCHYKNIGATR). Phosphothreonine occurs at positions 420, 424, and 439.

Belongs to the G-protein coupled receptor 1 family. Muscarinic acetylcholine receptor subfamily. CHRM2 sub-subfamily. Interacts with ARRB1 and ARRB2. Interacts with RACK1; the interaction regulates CHRM2 internalization. Post-translationally, phosphorylated in response to agonist treatment.

Its subcellular location is the cell membrane. The protein localises to the postsynaptic cell membrane. Functionally, the muscarinic acetylcholine receptor mediates various cellular responses, including inhibition of adenylate cyclase, breakdown of phosphoinositides and modulation of potassium channels through the action of G proteins. Primary transducing effect is adenylate cyclase inhibition. Signaling promotes phospholipase C activity, leading to the release of inositol trisphosphate (IP3); this then triggers calcium ion release into the cytosol. This chain is Muscarinic acetylcholine receptor M2 (CHRM2), found in Pan troglodytes (Chimpanzee).